The chain runs to 98 residues: NADH-ubiquinone oxidoreductase chain 4L (98 aa).

The next 2 helical transmembrane spans lie at 26–46 (LVASLLCLEGMMMSLFIMATL) and 61–81 (IILLVFAACEAAVGLALLISI).

It belongs to the complex I subunit 4L family. In terms of assembly, core subunit of respiratory chain NADH dehydrogenase (Complex I) which is composed of 45 different subunits.

Its subcellular location is the mitochondrion inner membrane. The catalysed reaction is a ubiquinone + NADH + 5 H(+)(in) = a ubiquinol + NAD(+) + 4 H(+)(out). In terms of biological role, core subunit of the mitochondrial membrane respiratory chain NADH dehydrogenase (Complex I) which catalyzes electron transfer from NADH through the respiratory chain, using ubiquinone as an electron acceptor. Part of the enzyme membrane arm which is embedded in the lipid bilayer and involved in proton translocation. The sequence is that of NADH-ubiquinone oxidoreductase chain 4L (MT-ND4L) from Macaca nigrescens (Gorontalo macaque).